Reading from the N-terminus, the 158-residue chain is MPLYEHVFLARQDASAQQVEELTTQITGVIEGLGGKVTKTESWGLRSLTYRMNKNRKAHFVLLNIDGPAAVVSEIERQERINEDVIRYLTVRVDEHEEGPSAMMRKADRDRERDDRGPREGGFRGDREGRGDRDGFRGDRGPRRPREDADAPAAAVEE.

Residues 92–149 are compositionally biased toward basic and acidic residues; the sequence is RVDEHEEGPSAMMRKADRDRERDDRGPREGGFRGDREGRGDRDGFRGDRGPRRPREDA. A disordered region spans residues 92–158; the sequence is RVDEHEEGPS…ADAPAAAVEE (67 aa).

Belongs to the bacterial ribosomal protein bS6 family.

Its function is as follows. Binds together with bS18 to 16S ribosomal RNA. The protein is Small ribosomal subunit protein bS6 of Rhodopseudomonas palustris (strain ATCC BAA-98 / CGA009).